The following is a 387-amino-acid chain: MPCQHYQRGDCRSCQWLATPYSTQLAKKQQHLQQQLQKLDCTQIQWQAPYTSILQGFRNKAKMAVSGMVERPILSHPQSEADLTDCPLYPAHFTNIFTILRDFIARAGLVPYNIQKQKGELKYILLTESQLDGGLMLRFVLRSEKKLPLVQRELPGLLAKLPQLKVVSLNIQPQHAAILEGEKEIFLTEQHTLEECFNQIPLFIRPQGFFQTNPQVAQGLYGTAQHWVQELPVHRLWDLFCGVGGFGLHCAQALQTQYPDRIIQLTGIEISASAIEAATLSAQKLGLKQVKFQSLDAKHFALAQSPAAQDDTPELVIVNPPRRGIGIELAQFLNQLAPHFILYSSCNAETMGKDVLHLSDYQLKKVQLFDMFPHTSHYEVLCLLERK.

4 residues coordinate [4Fe-4S] cluster: cysteine 3, cysteine 11, cysteine 14, and cysteine 86. S-adenosyl-L-methionine-binding residues include glutamine 211, phenylalanine 240, glutamate 269, and asparagine 319. The active-site Nucleophile is the cysteine 346.

The protein belongs to the class I-like SAM-binding methyltransferase superfamily. RNA M5U methyltransferase family. RlmC subfamily.

The enzyme catalyses uridine(747) in 23S rRNA + S-adenosyl-L-methionine = 5-methyluridine(747) in 23S rRNA + S-adenosyl-L-homocysteine + H(+). Catalyzes the formation of 5-methyl-uridine at position 747 (m5U747) in 23S rRNA. This is 23S rRNA (uracil(747)-C(5))-methyltransferase RlmC from Pasteurella multocida (strain Pm70).